The chain runs to 485 residues: Lysine--tRNA ligase (485 aa).

Positions 391 and 398 each coordinate Mg(2+).

This sequence belongs to the class-II aminoacyl-tRNA synthetase family. In terms of assembly, homodimer. Requires Mg(2+) as cofactor.

The protein localises to the cytoplasm. The enzyme catalyses tRNA(Lys) + L-lysine + ATP = L-lysyl-tRNA(Lys) + AMP + diphosphate. In Blochmanniella floridana, this protein is Lysine--tRNA ligase.